Here is an 892-residue protein sequence, read N- to C-terminus: Protein argonaute 11 (892 aa).

Residues 1-17 (MSSRGGGVGGRRGGPGG) are compositionally biased toward gly residues. Disordered stretches follow at residues 1 to 68 (MSSR…ALQP) and 86 to 117 (MEAREGASSSSSASAPAVGEVEPPSRAVGALP). The segment covering 86-107 (MEAREGASSSSSASAPAVGEVE) has biased composition (low complexity). The 115-residue stretch at 248-362 (SLKQFLAGTY…LPMEVCRIVK (115 aa)) folds into the PAZ domain. The Piwi domain maps to 541-848 (LLVIVLPDAN…AASRARHYLE (308 aa)). Positions 850–876 (GSLPDHGSSSASAAGGSRRNDRGVPVK) are disordered. The span at 856–866 (GSSSASAAGGS) shows a compositional bias: low complexity. The segment covering 867–876 (RRNDRGVPVK) has biased composition (basic and acidic residues).

The protein belongs to the argonaute family. Ago subfamily.

Functionally, probably involved in the RNA silencing pathway. May bind to short RNAs such as microRNAs (miRNAs) or short interfering RNAs (siRNAs), and represses the translation of mRNAs which are complementary to them. The protein is Protein argonaute 11 (AGO11) of Oryza sativa subsp. japonica (Rice).